Here is a 428-residue protein sequence, read N- to C-terminus: Peptidase B (428 aa).

Mn(2+) contacts are provided by K195 and D200. Residue K207 is part of the active site. 3 residues coordinate Mn(2+): D218, D277, and E279. The active site involves R281.

This sequence belongs to the peptidase M17 family. In terms of assembly, homohexamer. Mn(2+) serves as cofactor.

It localises to the cytoplasm. The enzyme catalyses Release of an N-terminal amino acid, Xaa, from a peptide or arylamide. Xaa is preferably Glu or Asp but may be other amino acids, including Leu, Met, His, Cys and Gln.. Its function is as follows. Probably plays an important role in intracellular peptide degradation. The chain is Peptidase B from Klebsiella pneumoniae subsp. pneumoniae (strain ATCC 700721 / MGH 78578).